The primary structure comprises 843 residues: Probable cleavage and polyadenylation specificity factor subunit 2 (843 aa).

Basic and acidic residues predominate over residues 414–425; that stretch reads AEETRLRMERAR. Disordered stretches follow at residues 414–443 and 691–753; these read AEET…DIAA and DKNR…TKGK. Acidic residues predominate over residues 432–441; it reads ESDDSDDDDI. The segment covering 732–746 has biased composition (basic and acidic residues); that stretch reads SGKEVENGHTNDSRT.

The protein belongs to the metallo-beta-lactamase superfamily. RNA-metabolizing metallo-beta-lactamase-like family. CPSF2/YSH1 subfamily. In terms of assembly, CPSF is a heterotetramer composed of four distinct subunits 160, 100, 70 and 30 kDa.

The protein localises to the nucleus. CPSF plays a key role in pre-mRNA 3'-end formation, recognizing the AAUAAA signal sequence and interacting with poly(A)polymerase and other factors to bring about cleavage and poly(A) addition. This is Probable cleavage and polyadenylation specificity factor subunit 2 (cpsf-2) from Caenorhabditis elegans.